A 240-amino-acid polypeptide reads, in one-letter code: Methylthioribulose-1-phosphate dehydratase (240 aa).

Positions 1–17 are enriched in polar residues; it reads MAQEVENNNNDHLVQSS. Residues 1–20 are disordered; the sequence is MAQEVENNNNDHLVQSSDPE. Residue C100 coordinates substrate. 2 residues coordinate Zn(2+): H117 and H119. The active-site Proton donor/acceptor is the E146. A Zn(2+)-binding site is contributed by H202.

It belongs to the aldolase class II family. MtnB subfamily. Requires Zn(2+) as cofactor.

The protein resides in the cytoplasm. The catalysed reaction is 5-(methylsulfanyl)-D-ribulose 1-phosphate = 5-methylsulfanyl-2,3-dioxopentyl phosphate + H2O. The protein operates within amino-acid biosynthesis; L-methionine biosynthesis via salvage pathway; L-methionine from S-methyl-5-thio-alpha-D-ribose 1-phosphate: step 2/6. Functionally, catalyzes the dehydration of methylthioribulose-1-phosphate (MTRu-1-P) into 2,3-diketo-5-methylthiopentyl-1-phosphate (DK-MTP-1-P). The polypeptide is Methylthioribulose-1-phosphate dehydratase (Neosartorya fischeri (strain ATCC 1020 / DSM 3700 / CBS 544.65 / FGSC A1164 / JCM 1740 / NRRL 181 / WB 181) (Aspergillus fischerianus)).